The sequence spans 540 residues: Berberine bridge enzyme-like 16 (540 aa).

An N-terminal signal peptide occupies residues 1–24; it reads MKFWSRPLTFLIIIIYLIIQQVNS. Cysteine 38 and cysteine 101 form a disulfide bridge. N-linked (GlcNAc...) asparagine glycosylation occurs at asparagine 59. Residues 79 to 254 form the FAD-binding PCMH-type domain; it reads STRKPEVIVA…LAWKIKLVRV (176 aa). The 6-(S-cysteinyl)-8alpha-(pros-histidyl)-FAD (His-Cys) cross-link spans 116-178; the sequence is HDYEGFSYTS…KVHAFPAGVC (63 aa). N-linked (GlcNAc...) asparagine glycans are attached at residues asparagine 325 and asparagine 496.

The protein belongs to the oxygen-dependent FAD-linked oxidoreductase family. It depends on FAD as a cofactor. The FAD cofactor is bound via a bicovalent 6-S-cysteinyl, 8alpha-N1-histidyl FAD linkage.

It localises to the secreted. It is found in the cell wall. This is Berberine bridge enzyme-like 16 from Arabidopsis thaliana (Mouse-ear cress).